The following is a 465-amino-acid chain: Ribulose bisphosphate carboxylase large chain (465 aa).

Lys-4 carries the N6,N6,N6-trimethyllysine modification. Asn-113 and Thr-163 together coordinate substrate. The Proton acceptor role is filled by Lys-165. Substrate is bound at residue Lys-167. The Mg(2+) site is built by Lys-191, Asp-193, and Glu-194. Lys-191 is modified (N6-carboxylysine). His-284 acts as the Proton acceptor in catalysis. Positions 285, 317, and 369 each coordinate substrate.

This sequence belongs to the RuBisCO large chain family. Type I subfamily. In terms of assembly, heterohexadecamer of 8 large chains and 8 small chains; disulfide-linked. The disulfide link is formed within the large subunit homodimers. It depends on Mg(2+) as a cofactor. The disulfide bond which can form in the large chain dimeric partners within the hexadecamer appears to be associated with oxidative stress and protein turnover.

Its subcellular location is the plastid. It localises to the chloroplast. The catalysed reaction is 2 (2R)-3-phosphoglycerate + 2 H(+) = D-ribulose 1,5-bisphosphate + CO2 + H2O. It carries out the reaction D-ribulose 1,5-bisphosphate + O2 = 2-phosphoglycolate + (2R)-3-phosphoglycerate + 2 H(+). Functionally, ruBisCO catalyzes two reactions: the carboxylation of D-ribulose 1,5-bisphosphate, the primary event in carbon dioxide fixation, as well as the oxidative fragmentation of the pentose substrate in the photorespiration process. Both reactions occur simultaneously and in competition at the same active site. The chain is Ribulose bisphosphate carboxylase large chain from Bursera inaguensis (Elaphrium inaguense).